We begin with the raw amino-acid sequence, 146 residues long: Ribosome-binding factor A (146 aa).

Polar residues predominate over residues 122–134; that stretch reads QQQFGSAEDVTSN. The disordered stretch occupies residues 122–146; sequence QQQFGSAEDVTSNDIDEADDTEGKA. Residues 135–146 show a composition bias toward acidic residues; it reads DIDEADDTEGKA.

Belongs to the RbfA family. Monomer. Binds 30S ribosomal subunits, but not 50S ribosomal subunits or 70S ribosomes.

The protein localises to the cytoplasm. Its function is as follows. One of several proteins that assist in the late maturation steps of the functional core of the 30S ribosomal subunit. Associates with free 30S ribosomal subunits (but not with 30S subunits that are part of 70S ribosomes or polysomes). Required for efficient processing of 16S rRNA. May interact with the 5'-terminal helix region of 16S rRNA. This Shewanella sp. (strain ANA-3) protein is Ribosome-binding factor A.